Here is a 252-residue protein sequence, read N- to C-terminus: Imidazole glycerol phosphate synthase subunit HisF (252 aa).

Catalysis depends on residues D12 and D131.

The protein belongs to the HisA/HisF family. In terms of assembly, heterodimer of HisH and HisF.

The protein localises to the cytoplasm. The enzyme catalyses 5-[(5-phospho-1-deoxy-D-ribulos-1-ylimino)methylamino]-1-(5-phospho-beta-D-ribosyl)imidazole-4-carboxamide + L-glutamine = D-erythro-1-(imidazol-4-yl)glycerol 3-phosphate + 5-amino-1-(5-phospho-beta-D-ribosyl)imidazole-4-carboxamide + L-glutamate + H(+). Its pathway is amino-acid biosynthesis; L-histidine biosynthesis; L-histidine from 5-phospho-alpha-D-ribose 1-diphosphate: step 5/9. In terms of biological role, IGPS catalyzes the conversion of PRFAR and glutamine to IGP, AICAR and glutamate. The HisF subunit catalyzes the cyclization activity that produces IGP and AICAR from PRFAR using the ammonia provided by the HisH subunit. This is Imidazole glycerol phosphate synthase subunit HisF from Thermus thermophilus (strain ATCC BAA-163 / DSM 7039 / HB27).